Reading from the N-terminus, the 1034-residue chain is Phosphoenolpyruvate carboxylase (1034 aa).

Active-site residues include His-203 and Lys-680.

This sequence belongs to the PEPCase type 1 family. The cofactor is Mg(2+).

The catalysed reaction is oxaloacetate + phosphate = phosphoenolpyruvate + hydrogencarbonate. Its function is as follows. Forms oxaloacetate, a four-carbon dicarboxylic acid source for the tricarboxylic acid cycle. The protein is Phosphoenolpyruvate carboxylase (ppc) of Synechocystis sp. (strain ATCC 27184 / PCC 6803 / Kazusa).